Consider the following 360-residue polypeptide: Phenylalanine--tRNA ligase alpha subunit (360 aa).

E260 provides a ligand contact to Mg(2+).

This sequence belongs to the class-II aminoacyl-tRNA synthetase family. Phe-tRNA synthetase alpha subunit type 1 subfamily. Tetramer of two alpha and two beta subunits. Mg(2+) serves as cofactor.

It localises to the cytoplasm. It catalyses the reaction tRNA(Phe) + L-phenylalanine + ATP = L-phenylalanyl-tRNA(Phe) + AMP + diphosphate + H(+). The protein is Phenylalanine--tRNA ligase alpha subunit of Rhodopseudomonas palustris (strain ATCC BAA-98 / CGA009).